The chain runs to 291 residues: Probable 2-(5''-triphosphoribosyl)-3'-dephosphocoenzyme-A synthase (291 aa).

Belongs to the CitG/MdcB family.

It carries out the reaction 3'-dephospho-CoA + ATP = 2'-(5''-triphospho-alpha-D-ribosyl)-3'-dephospho-CoA + adenine. In terms of biological role, involved in the formation of 2-(5''-phosphoribosyl)-3'-dephosphocoenzyme-A, the prosthetic group of the acyl-carrier protein of the malonate decarboxylase. In Pseudomonas savastanoi pv. phaseolicola (strain 1448A / Race 6) (Pseudomonas syringae pv. phaseolicola (strain 1448A / Race 6)), this protein is Probable 2-(5''-triphosphoribosyl)-3'-dephosphocoenzyme-A synthase.